The primary structure comprises 91 residues: Putative membrane protein insertion efficiency factor (91 aa).

Belongs to the UPF0161 family.

Its subcellular location is the cell inner membrane. In terms of biological role, could be involved in insertion of integral membrane proteins into the membrane. This Saccharophagus degradans (strain 2-40 / ATCC 43961 / DSM 17024) protein is Putative membrane protein insertion efficiency factor.